The chain runs to 119 residues: Ribosome-binding factor A (119 aa).

It belongs to the RbfA family. As to quaternary structure, monomer. Binds 30S ribosomal subunits, but not 50S ribosomal subunits or 70S ribosomes.

It localises to the cytoplasm. Functionally, one of several proteins that assist in the late maturation steps of the functional core of the 30S ribosomal subunit. Associates with free 30S ribosomal subunits (but not with 30S subunits that are part of 70S ribosomes or polysomes). Required for efficient processing of 16S rRNA. May interact with the 5'-terminal helix region of 16S rRNA. This chain is Ribosome-binding factor A, found in Chlorobium phaeovibrioides (strain DSM 265 / 1930) (Prosthecochloris vibrioformis (strain DSM 265)).